The sequence spans 404 residues: Corticosteroid-binding globulin (404 aa).

The N-terminal stretch at 1–30 (MAWSTRTMMSLALYTCFLWLLTSGLKTVQS) is a signal peptide. N-linked (GlcNAc...) asparagine glycosylation is found at N95 and N225. Residue Q253 participates in cortisol binding. N-linked (GlcNAc...) asparagine glycosylation is present at N259. A cortisol-binding site is contributed by E285. Residue N326 is glycosylated (N-linked (GlcNAc...) asparagine). Residue W392 participates in cortisol binding.

It belongs to the serpin family. In terms of tissue distribution, expressed by the liver; secreted in plasma.

The protein resides in the secreted. Major transport protein for glucocorticoids and progestins in the blood of almost all vertebrate species. This chain is Corticosteroid-binding globulin (SERPINA6), found in Mesocricetus auratus (Golden hamster).